A 468-amino-acid chain; its full sequence is uncharacterized protein (468 aa).

In terms of domain architecture, HTH gntR-type spans 1–69 (MKKYQQLAEQ…PQSGYYVAPQ (69 aa)). Position 312 is an N6-(pyridoxal phosphate)lysine (Lys-312).

It in the C-terminal section; belongs to the class-I pyridoxal-phosphate-dependent aminotransferase family.

This is an uncharacterized protein from Escherichia coli (strain K12).